A 999-amino-acid chain; its full sequence is Lysosomal alpha-mannosidase (999 aa).

Residues 1–25 (MVGDARPSGVRAGGCRGAVGSRTSS) form a disordered region. Residues 1–50 (MVGDARPSGVRAGGCRGAVGSRTSSRALRPPLPPLSSLFVLFLAAPCAWA) form the signal peptide. Zn(2+) contacts are provided by His73 and Asp75. Asn134 is a glycosylation site (N-linked (GlcNAc...) asparagine). Asp197 provides a ligand contact to Zn(2+). Asp197 functions as the Nucleophile in the catalytic mechanism. A disulfide bridge links Cys269 with Cys274. The N-linked (GlcNAc...) asparagine glycan is linked to Asn369. His448 contacts Zn(2+). Cys495 and Cys503 are disulfide-bonded. Residue Asn499 is glycosylated (N-linked (GlcNAc...) asparagine). The propeptide occupies 591 to 621 (SRDLVIQNEYLRARFDPNTGLLMELENLEQN). Asn634, Asn640, Asn681, Asn755, and Asn919 each carry an N-linked (GlcNAc...) asparagine glycan.

Belongs to the glycosyl hydrolase 38 family. As to quaternary structure, homodimer. Requires Zn(2+) as cofactor. Post-translationally, processed into 5 peptides of 35/38 kDa (A), 11/13 kDa (B) and 22 kDa (C), 38 kDa (D) and 13/15 kDa (E). The A, B and C peptides are disulfide-linked into a 67 kDa complex. In terms of processing, heavily glycosylated. Some sugar chains are of the high-mannose type.

It localises to the lysosome. The catalysed reaction is Hydrolysis of terminal, non-reducing alpha-D-mannose residues in alpha-D-mannosides.. Functionally, necessary for the catabolism of N-linked carbohydrates released during glycoprotein turnover. This Bos taurus (Bovine) protein is Lysosomal alpha-mannosidase (MAN2B1).